The sequence spans 133 residues: ATP synthase epsilon chain (133 aa).

Belongs to the ATPase epsilon chain family. F-type ATPases have 2 components, CF(1) - the catalytic core - and CF(0) - the membrane proton channel. CF(1) has five subunits: alpha(3), beta(3), gamma(1), delta(1), epsilon(1). CF(0) has three main subunits: a, b and c.

It localises to the cell membrane. Functionally, produces ATP from ADP in the presence of a proton gradient across the membrane. This is ATP synthase epsilon chain from Clostridium botulinum (strain ATCC 19397 / Type A).